Consider the following 268-residue polypeptide: Tryptophan synthase alpha chain (268 aa).

Active-site proton acceptor residues include E49 and D60.

Belongs to the TrpA family. In terms of assembly, tetramer of two alpha and two beta chains.

It catalyses the reaction (1S,2R)-1-C-(indol-3-yl)glycerol 3-phosphate + L-serine = D-glyceraldehyde 3-phosphate + L-tryptophan + H2O. Its pathway is amino-acid biosynthesis; L-tryptophan biosynthesis; L-tryptophan from chorismate: step 5/5. Its function is as follows. The alpha subunit is responsible for the aldol cleavage of indoleglycerol phosphate to indole and glyceraldehyde 3-phosphate. The chain is Tryptophan synthase alpha chain from Haemophilus influenzae (strain 86-028NP).